A 175-amino-acid chain; its full sequence is Transcription factor E (175 aa).

Positions 3–88 constitute an HTH TFE/IIEalpha-type domain; that stretch reads ENPLIQQVLF…TWKPSLEKVP (86 aa).

Belongs to the TFE family. In terms of assembly, monomer. Interaction with RNA polymerase subunits RpoF and RpoE is necessary for Tfe stimulatory transcription activity. Able to interact with Tbp and RNA polymerase in the absence of DNA promoter. Interacts both with the preinitiation and elongation complexes.

Transcription factor that plays a role in the activation of archaeal genes transcribed by RNA polymerase. Facilitates transcription initiation by enhancing TATA-box recognition by TATA-box-binding protein (Tbp), and transcription factor B (Tfb) and RNA polymerase recruitment. Not absolutely required for transcription in vitro, but particularly important in cases where Tbp or Tfb function is not optimal. It dynamically alters the nucleic acid-binding properties of RNA polymerases by stabilizing the initiation complex and destabilizing elongation complexes. Seems to translocate with the RNA polymerase following initiation and acts by binding to the non template strand of the transcription bubble in elongation complexes. This chain is Transcription factor E, found in Methanococcus maripaludis (strain DSM 14266 / JCM 13030 / NBRC 101832 / S2 / LL).